A 209-amino-acid polypeptide reads, in one-letter code: Dual specificity protein phosphatase 22 (209 aa).

Residues G4 to Y144 form the Tyrosine-protein phosphatase domain. The Phosphocysteine intermediate role is filled by C88. The disordered stretch occupies residues D170–H193. Low complexity predominate over residues A177 to H193.

The protein belongs to the protein-tyrosine phosphatase family. Non-receptor class dual specificity subfamily.

It is found in the cytoplasm. Its subcellular location is the nucleus. It carries out the reaction O-phospho-L-tyrosyl-[protein] + H2O = L-tyrosyl-[protein] + phosphate. The enzyme catalyses O-phospho-L-seryl-[protein] + H2O = L-seryl-[protein] + phosphate. It catalyses the reaction O-phospho-L-threonyl-[protein] + H2O = L-threonyl-[protein] + phosphate. Its function is as follows. Activates the Jnk signaling pathway. Dephosphorylates and deactivates p38 and stress-activated protein kinase/c-Jun N-terminal kinase (SAPK/JNK). This is Dual specificity protein phosphatase 22 (dusp22) from Xenopus tropicalis (Western clawed frog).